Reading from the N-terminus, the 118-residue chain is uncharacterized protein (118 aa).

This sequence belongs to the HesB/IscA family. Ycf83 subfamily.

This is an uncharacterized protein from Synechocystis sp. (strain ATCC 27184 / PCC 6803 / Kazusa).